We begin with the raw amino-acid sequence, 400 residues long: CinA-like protein (400 aa).

It belongs to the CinA family.

The polypeptide is CinA-like protein (Escherichia coli (strain 55989 / EAEC)).